Here is a 2150-residue protein sequence, read N- to C-terminus: Zinc finger protein sdc-3 (2150 aa).

The segment at 443–987 is dosage compensation domain 1; that stretch reads QEITSPMFAL…DQVENEEPER (545 aa). Disordered regions lie at residues 874-894, 1261-1373, 1411-1448, and 1491-1670; these read EKEW…EEED, GSVV…GPEV, FETS…GPIN, and EVLQ…SEKL. Positions 1267-1293 are enriched in polar residues; that stretch reads TNQQEENVTSEGPTLQEGSSIPSSSHI. Residues 1321-1333 show a composition bias toward basic residues; that stretch reads KKSGKTTRGRPKK. Basic and acidic residues predominate over residues 1347–1357; the sequence is GQKEEAAHEPE. Positions 1504-1524 are enriched in basic residues; that stretch reads SSKKRGRRRKKTPPHIAKARK. Residues 1508–1516 form a sex determination domain region; the sequence is RGRRRKKTP. Residues 1585–1598 show a composition bias toward basic and acidic residues; sequence EDLHETERPGHVGE. Over residues 1638-1648 the composition is skewed to polar residues; the sequence is IQSQAGTNASP. 2 consecutive C2H2-type zinc fingers follow at residues 2078-2105 and 2117-2141; these read HKCV…GKLH and DDCQ…NHHH. Residues 2080 to 2105 are dosage compensation domain 2; it reads CVQCSIRNQSVYFSSYSLLELHGKLH.

Component of the SDC complex, which consists of sdc-1, sdc-2 and sdc-3. Within the complex, interacts with sdc-1 and sdc-2. Interacts with dpy-21. In terms of processing, sumoylated. Sumoylation is important for assembly of the dosage compensation complex and its robust binding to the X chromosome. In terms of tissue distribution, expressed in somatic and in germline tissues in hermaphrodites (XX). In males (XO), only present in embryos younger than the 100-cell stage (at protein level).

The protein localises to the chromosome. It is found in the nucleus. Functionally, component of the SDC complex that functions in sex determination and in X chromosome dosage compensation specifically in hermaphrodite (XX) animals. Plays a central role in the recruitment of the condensin I-like dosage compensation complex to the male sex-determining autosomal gene her-1, thereby contributing to its repression and initiating hermaphrodite sexual development. Involved in the recruitment and assembly of the dosage compensation complex and the dosage compensation protein dpy-21 onto the X chromosomes in hermaphrodites, which leads to a reduction of X-linked gene transcription and an equalization of X-linked gene expression between the sexes. The polypeptide is Zinc finger protein sdc-3 (sdc-3) (Caenorhabditis elegans).